A 479-amino-acid chain; its full sequence is Anaerobic nitric oxide reductase flavorubredoxin (479 aa).

The tract at residues 30-210 (LRGSSYNSYL…PFSRLVTPKI (181 aa)) is zinc metallo-hydrolase. Residues His79, Glu81, Asp83, His147, Asp166, and His227 each contribute to the Fe cation site. The Flavodoxin-like domain occupies 254–393 (ITIFYDTMSN…LCREHGREIA (140 aa)). Residues 260 to 264 (TMSNN) and 342 to 369 (AFGS…EMSL) contribute to the FMN site. The Rubredoxin-like domain maps to 423 to 479 (GPRMQCSVCQWIYDPAKGEPMQDVAPGTPWSEVPDNFLCPECSLGKDVFEELASEAK). 4 residues coordinate Fe cation: Cys428, Cys431, Cys461, and Cys464.

In the N-terminal section; belongs to the zinc metallo-hydrolase group 3 family. Homotetramer. Fe cation serves as cofactor. FMN is required as a cofactor.

The protein resides in the cytoplasm. The protein operates within nitrogen metabolism; nitric oxide reduction. Anaerobic nitric oxide reductase; uses NADH to detoxify nitric oxide (NO), protecting several 4Fe-4S NO-sensitive enzymes. Has at least 2 reductase partners, only one of which (NorW, flavorubredoxin reductase) has been identified. NO probably binds to the di-iron center; electrons enter from the reductase at rubredoxin and are transferred sequentially to the FMN center and the di-iron center. Also able to function as an aerobic oxygen reductase. The polypeptide is Anaerobic nitric oxide reductase flavorubredoxin (norV) (Escherichia coli (strain K12 / DH10B)).